Here is a 232-residue protein sequence, read N- to C-terminus: LexA repressor (232 aa).

The segment at residues 36-56 (IREIGDAAGLQSTSSVAYQLK) is a DNA-binding region (H-T-H motif). The span at 62-86 (GFLRRDPNKPRAVDVRHLPETDNRT) shows a compositional bias: basic and acidic residues. The segment at 62–107 (GFLRRDPNKPRAVDVRHLPETDNRTKAGPKAKARPTAGASPQPELA) is disordered. Active-site for autocatalytic cleavage activity residues include S156 and K193.

Belongs to the peptidase S24 family. In terms of assembly, homodimer.

The catalysed reaction is Hydrolysis of Ala-|-Gly bond in repressor LexA.. Functionally, represses a number of genes involved in the response to DNA damage (SOS response), including recA and lexA. In the presence of single-stranded DNA, RecA interacts with LexA causing an autocatalytic cleavage which disrupts the DNA-binding part of LexA, leading to derepression of the SOS regulon and eventually DNA repair. The sequence is that of LexA repressor from Corynebacterium efficiens (strain DSM 44549 / YS-314 / AJ 12310 / JCM 11189 / NBRC 100395).